Reading from the N-terminus, the 567-residue chain is Arginine--tRNA ligase (567 aa).

The short motif at 121–131 (ANPNGPLHVGH) is the 'HIGH' region element.

This sequence belongs to the class-I aminoacyl-tRNA synthetase family.

It is found in the cytoplasm. It catalyses the reaction tRNA(Arg) + L-arginine + ATP = L-arginyl-tRNA(Arg) + AMP + diphosphate. The polypeptide is Arginine--tRNA ligase (Methanococcoides burtonii (strain DSM 6242 / NBRC 107633 / OCM 468 / ACE-M)).